The sequence spans 213 residues: Serine acetyltransferase (213 aa).

Belongs to the transferase hexapeptide repeat family.

It is found in the cytoplasm. The catalysed reaction is L-serine + acetyl-CoA = O-acetyl-L-serine + CoA. It functions in the pathway amino-acid biosynthesis; L-cysteine biosynthesis; L-cysteine from L-serine: step 1/2. This is Serine acetyltransferase (cysE) from Staphylococcus aureus (strain COL).